Consider the following 500-residue polypeptide: Protein DETOXIFICATION 24 (500 aa).

The disordered stretch occupies residues 1-20 (MSTQEEMEERLLREGSDAEG). Transmembrane regions (helical) follow at residues 48–67 (SSLFRMTSFGSIIVAQAFIG), 72–92 (LGLAAYALLQSTFIRFLYGLM), 124–144 (IVDMAVTTLFLPFIVLAGPIL), 160–180 (IYPWMIPYVYSLIFTMTIQMY), 188–208 (AIVGVLSTLSLALDLVVTWWC), 225–245 (VGSWAMVLAEFVYIFGGWCPF), 266–286 (ISSGFMICLEYWYMSILVLMA), 298–318 (AFSICQYIYTWELNICLGFLG), 342–362 (VILTISTLMGVIFSALCLAFC), 384–404 (VILAVSILLNSIQPILSGVAV), 411–431 (IVAVVNLASYYAIGIPLGLIL), and 441–461 (GLWSGMLAGIAIQTIILCYII).

The protein belongs to the multi antimicrobial extrusion (MATE) (TC 2.A.66.1) family.

The protein localises to the membrane. This Arabidopsis thaliana (Mouse-ear cress) protein is Protein DETOXIFICATION 24.